The chain runs to 689 residues: Methionine--tRNA ligase (689 aa).

Residues 16 to 26 (PYANAGLHLGH) carry the 'HIGH' region motif. Zn(2+) contacts are provided by C147, C150, C160, and C163. The short motif at 342-346 (KMSKS) is the 'KMSKS' region element. K345 contributes to the ATP binding site. One can recognise a tRNA-binding domain in the interval 585–689 (DFAKVDLRVG…AGVKPGMRVG (105 aa)).

The protein belongs to the class-I aminoacyl-tRNA synthetase family. MetG type 1 subfamily. In terms of assembly, homodimer. It depends on Zn(2+) as a cofactor.

Its subcellular location is the cytoplasm. It carries out the reaction tRNA(Met) + L-methionine + ATP = L-methionyl-tRNA(Met) + AMP + diphosphate. Its function is as follows. Is required not only for elongation of protein synthesis but also for the initiation of all mRNA translation through initiator tRNA(fMet) aminoacylation. In Chromobacterium violaceum (strain ATCC 12472 / DSM 30191 / JCM 1249 / CCUG 213 / NBRC 12614 / NCIMB 9131 / NCTC 9757 / MK), this protein is Methionine--tRNA ligase.